The chain runs to 236 residues: Orotidine 5'-phosphate decarboxylase (236 aa).

Substrate contacts are provided by residues Asp-14, Lys-36, 63–72, Thr-123, Arg-184, Gln-193, Gly-213, and Arg-214; that span reads DLKFHDIPNT. Residue Lys-65 is the Proton donor of the active site.

This sequence belongs to the OMP decarboxylase family. Type 1 subfamily. In terms of assembly, homodimer.

It catalyses the reaction orotidine 5'-phosphate + H(+) = UMP + CO2. Its pathway is pyrimidine metabolism; UMP biosynthesis via de novo pathway; UMP from orotate: step 2/2. Catalyzes the decarboxylation of orotidine 5'-monophosphate (OMP) to uridine 5'-monophosphate (UMP). This Marinobacter nauticus (strain ATCC 700491 / DSM 11845 / VT8) (Marinobacter aquaeolei) protein is Orotidine 5'-phosphate decarboxylase.